A 605-amino-acid chain; its full sequence is Glutamine--fructose-6-phosphate aminotransferase [isomerizing] (605 aa).

Residue Cys2 is the Nucleophile; for GATase activity of the active site. Residues 2 to 220 enclose the Glutamine amidotransferase type-2 domain; that stretch reads CGIVGVTGKD…DGEIVVVKPD (219 aa). SIS domains lie at 286-426 and 458-595; these read LLTA…VDQP and AKSA…VDKP. Lys600 serves as the catalytic For Fru-6P isomerization activity.

Homodimer.

Its subcellular location is the cytoplasm. It catalyses the reaction D-fructose 6-phosphate + L-glutamine = D-glucosamine 6-phosphate + L-glutamate. Functionally, catalyzes the first step in hexosamine metabolism, converting fructose-6P into glucosamine-6P using glutamine as a nitrogen source. The sequence is that of Glutamine--fructose-6-phosphate aminotransferase [isomerizing] from Lactiplantibacillus plantarum (strain ATCC BAA-793 / NCIMB 8826 / WCFS1) (Lactobacillus plantarum).